A 567-amino-acid polypeptide reads, in one-letter code: Proline--tRNA ligase (567 aa).

It belongs to the class-II aminoacyl-tRNA synthetase family. ProS type 1 subfamily. As to quaternary structure, homodimer.

The protein resides in the cytoplasm. It catalyses the reaction tRNA(Pro) + L-proline + ATP = L-prolyl-tRNA(Pro) + AMP + diphosphate. In terms of biological role, catalyzes the attachment of proline to tRNA(Pro) in a two-step reaction: proline is first activated by ATP to form Pro-AMP and then transferred to the acceptor end of tRNA(Pro). As ProRS can inadvertently accommodate and process non-cognate amino acids such as alanine and cysteine, to avoid such errors it has two additional distinct editing activities against alanine. One activity is designated as 'pretransfer' editing and involves the tRNA(Pro)-independent hydrolysis of activated Ala-AMP. The other activity is designated 'posttransfer' editing and involves deacylation of mischarged Ala-tRNA(Pro). The misacylated Cys-tRNA(Pro) is not edited by ProRS. This Geobacillus sp. (strain WCH70) protein is Proline--tRNA ligase.